We begin with the raw amino-acid sequence, 263 residues long: Probable adenylate kinase 7, mitochondrial (263 aa).

The transit peptide at 1–30 (MAWLSRVRGVSPVTRLAAIRRSFGSAAALE) directs the protein to the mitochondrion. 72 to 77 (GAWRHV) provides a ligand contact to ATP. Residues 92-121 (SMGSLVRQELNPRSSLYKEIASAVNERKLV) are NMP. AMP contacts are provided by residues Arg98, 119–121 (KLV), 149–152 (GIPR), Gln156, and Arg206. Residue Gly234 coordinates ATP.

This sequence belongs to the adenylate kinase family. In terms of assembly, monomer.

The protein localises to the mitochondrion. The enzyme catalyses AMP + ATP = 2 ADP. In terms of biological role, catalyzes the reversible transfer of the terminal phosphate group between ATP and AMP. Plays an important role in cellular energy homeostasis and in adenine nucleotide metabolism. In Arabidopsis thaliana (Mouse-ear cress), this protein is Probable adenylate kinase 7, mitochondrial.